We begin with the raw amino-acid sequence, 390 residues long: Dihydroorotase (390 aa).

Zn(2+) contacts are provided by His-54 and His-56. Substrate is bound by residues 56–58 and Asn-88; that span reads HIR. Residues Lys-136, His-160, His-197, and Asp-259 each contribute to the Zn(2+) site. At Lys-136 the chain carries N6-carboxylysine. The active site involves Asp-259. Residues His-263 and 277–278 contribute to the substrate site; that span reads PG.

It belongs to the metallo-dependent hydrolases superfamily. DHOase family. Class I DHOase subfamily. Zn(2+) serves as cofactor.

The enzyme catalyses (S)-dihydroorotate + H2O = N-carbamoyl-L-aspartate + H(+). It participates in pyrimidine metabolism; UMP biosynthesis via de novo pathway; (S)-dihydroorotate from bicarbonate: step 3/3. In terms of biological role, catalyzes the reversible cyclization of carbamoyl aspartate to dihydroorotate. The sequence is that of Dihydroorotase from Saccharolobus solfataricus (strain ATCC 35092 / DSM 1617 / JCM 11322 / P2) (Sulfolobus solfataricus).